The sequence spans 882 residues: MAGGAAHPGAELLPFARFLDSSLQPLVYGYGRGTLHELRAREFGRLAGTVYLDHAGTTLFPQSQITSFMKDLMENVYGNPHSQNISSKLTHDTVEQVRFRILAHFHTSPEDYTVIFTSGSTAALKLVAEAFPWVSPGPEGSGSCFCYLTDSHTSVVGMRKITAAMNVSSIPVRPEDMWSAERQDAAAAGDPAGQPPHLFCYPAQSNFSGTRYPLSWIGEVKSGRRRPASRPGKWFVLLDAAAFVGTSPLDLSVHQADFVPISFYKIFGFPTGLGALLVNNRLAALLRKTYFGGGTAAAYLAGDDFYVPRESVAERFEDGTISFLDVIALKHGFDALERLTGGMESIRQHTFTLAQYTYTALSSLRYPNGAPVVQIYSDSDFSSPEVQGPVISFNVLDDHGNVVGYSQVDKMASLHNIHVRTGCFCNTGACQRHLGISDEMVKKHLQAGHVCGDDVDLIDGQPTGSVRISFGYMSTLEDAQAFLRFIIATRLHSSHGQPLPLATPGEAGAPPEDSEAQNAVPAARARGSSSPQEDTSPHSGVWNNSPTAVDAEGLCPPLLEATGTQQTTSEKAADVPDGDLRSHVITNLFLYPIKSCAAFEVIRWPLGSQGLLYDRSWMVVNHNGICLSQKQEPRLCLIQPFIDLQRRIMVIKAQGMEPIEVPLEENSEQVQICQSKVCADRVNTYDCGEKISNWLSKFFGRPYHLIKQSSDFQRNAKKKHGKDQSAHTTATLSLVNEAQYLLINRSSILELQQQLSTSCENGKEELFPMNNLISRFRANIITNGTRAFEEEKWDEISIGSLRFQVLGPCHRCQMICIDQQTGQRNQDVFQKLSERRERKVKFGVYLMHTSLDLSSPCYLSVGSQVLPLLKENMEHHDIPATE.

Position 265 is an N6-(pyridoxal phosphate)lysine (Lys-265). Cys-425 is a catalytic residue. Positions 496-546 are disordered; that stretch reads GQPLPLATPGEAGAPPEDSEAQNAVPAARARGSSSPQEDTSPHSGVWNNSP. Over residues 527–546 the composition is skewed to polar residues; it reads GSSSPQEDTSPHSGVWNNSP. Residues Ser-528 and Ser-530 each carry the phosphoserine modification. The 162-residue stretch at 707–868 folds into the MOSC domain; that stretch reads KQSSDFQRNA…LSVGSQVLPL (162 aa).

Belongs to the class-V pyridoxal-phosphate-dependent aminotransferase family. MOCOS subfamily. The cofactor is pyridoxal 5'-phosphate. Ubiquitously expressed.

The catalysed reaction is Mo-molybdopterin + L-cysteine + AH2 = thio-Mo-molybdopterin + L-alanine + A + H2O. It functions in the pathway cofactor biosynthesis; molybdopterin biosynthesis. Functionally, sulfurates the molybdenum cofactor. Sulfation of molybdenum is essential for xanthine dehydrogenase (XDH) and aldehyde oxidase (ADO) enzymes in which molybdenum cofactor is liganded by 1 oxygen and 1 sulfur atom in active form. The polypeptide is Molybdenum cofactor sulfurase (Bos taurus (Bovine)).